The sequence spans 516 residues: MMRYQWWLYLVYAIGLMLCLGPSYIHPDEHFQCIEILAMQFMKVKGTIPWEFKSKFAARSYGPLLLVYGPLFTILESFPEIQDNPALILYSMRLQNYVMYLLCYHFLIPKLIRDERKAVQFIKKSLLLTSYVTWTYQTHTFSNSIETLALISTLTVMEDMVNEKNIQRSNFKNSVILGLIFSFGVFNRVTFPAFIFLPCLILFWKFYRVHWKSFSLLLLSFSFSSCLFVLIDTNIYNNGKGFVITPLNNLKYNLNVQNLQVHGLHPRYTHLLVNLPQIVGPVLLLAIFSGYKLDKLSTYAIISGLLFLSFFQHQELRFLVPLVPLLVTNLNWTPLSSTLVNKKIFKGTWLLFNIIMAFIMGISHQAGIIQFLGDYFHFRTEQMGVHIWWKTYSPPTWMYMSNNLTVSSLINTQDGIESIDEVAFSVGNHHVIDLKGCDLPLLTETIRRLRLNGSITPLTLVTPNSMTSELKKLKRDGTINLIPKRNYLFHLDLDHLDFNDFTTFKPGLTVYSIELL.

Residues 1 to 5 (MMRYQ) lie on the Lumenal side of the membrane. Residues 6–26 (WWLYLVYAIGLMLCLGPSYIH) traverse the membrane as a helical segment. Over 27–60 (PDEHFQCIEILAMQFMKVKGTIPWEFKSKFAARS) the chain is Cytoplasmic. The helical transmembrane segment at 61–81 (YGPLLLVYGPLFTILESFPEI) threads the bilayer. Topologically, residues 82 to 175 (QDNPALILYS…IQRSNFKNSV (94 aa)) are lumenal. The helical transmembrane segment at 176-196 (ILGLIFSFGVFNRVTFPAFIF) threads the bilayer. Residues 197–210 (LPCLILFWKFYRVH) are Cytoplasmic-facing. The chain crosses the membrane as a helical span at residues 211 to 231 (WKSFSLLLLSFSFSSCLFVLI). Residues 232-270 (DTNIYNNGKGFVITPLNNLKYNLNVQNLQVHGLHPRYTH) are Lumenal-facing. The helical transmembrane segment at 271–291 (LLVNLPQIVGPVLLLAIFSGY) threads the bilayer. Over 292-295 (KLDK) the chain is Cytoplasmic. Residues 296–316 (LSTYAIISGLLFLSFFQHQEL) traverse the membrane as a helical segment. Residue Arg317 is a topological domain, lumenal. The helical transmembrane segment at 318–338 (FLVPLVPLLVTNLNWTPLSST) threads the bilayer. Over 339-348 (LVNKKIFKGT) the chain is Cytoplasmic. A helical transmembrane segment spans residues 349–369 (WLLFNIIMAFIMGISHQAGII). Over 370–516 (QFLGDYFHFR…GLTVYSIELL (147 aa)) the chain is Lumenal. Residues Asn403 and Asn452 are each glycosylated (N-linked (GlcNAc...) asparagine).

The protein belongs to the glycosyltransferase 22 family. PIGZ subfamily.

The protein resides in the endoplasmic reticulum membrane. It functions in the pathway glycolipid biosynthesis; glycosylphosphatidylinositol-anchor biosynthesis. In terms of biological role, alpha-1,2-mannosyltransferase involved in glycosylphosphatidylinositol-anchor biosynthesis. Transfers a fourth mannose to trimannosyl-GPIs during GPI precursor assembly. The presence of a fourth mannose in GPI is essential in fungi. Involved in plasmid maintenance with SMP2. The protein is GPI mannosyltransferase 4 (SMP3) of Saccharomyces cerevisiae (strain ATCC 204508 / S288c) (Baker's yeast).